We begin with the raw amino-acid sequence, 383 residues long: F-box/kelch-repeat protein At2g29830 (383 aa).

The interval 1 to 21 (MVVLSEIPGDPNEDNQNENPQ) is disordered. The segment covering 11 to 21 (PNEDNQNENPQ) has biased composition (acidic residues). In terms of domain architecture, F-box spans 27–73 (LPILLQLPEELIASIVALIPRCHYPSLSLVSRAFRHLITSQELYVAR). 5 Kelch repeats span residues 130–178 (KMYV…IIDG), 179–224 (RIYV…FITY), 226–272 (VMQG…VVGD), 274–317 (LYAL…YTST), and 324–370 (KLVI…RDLP).

This chain is F-box/kelch-repeat protein At2g29830, found in Arabidopsis thaliana (Mouse-ear cress).